A 161-amino-acid chain; its full sequence is Arginine repressor (161 aa).

The protein belongs to the ArgR family.

The protein localises to the cytoplasm. Its pathway is amino-acid biosynthesis; L-arginine biosynthesis [regulation]. Its function is as follows. Regulates arginine biosynthesis genes. This is Arginine repressor from Corynebacterium aurimucosum (strain ATCC 700975 / DSM 44827 / CIP 107346 / CN-1) (Corynebacterium nigricans).